Reading from the N-terminus, the 183-residue chain is uncharacterized protein (183 aa).

An N-terminal signal peptide occupies residues 1–17; sequence MVLFILVLYTCIQDGNG.

This is an uncharacterized protein from Saccharomyces cerevisiae (strain ATCC 204508 / S288c) (Baker's yeast).